Consider the following 138-residue polypeptide: Large ribosomal subunit protein uL16 (138 aa).

This sequence belongs to the universal ribosomal protein uL16 family. In terms of assembly, part of the 50S ribosomal subunit.

Binds 23S rRNA and is also seen to make contacts with the A and possibly P site tRNAs. This Anaeromyxobacter dehalogenans (strain 2CP-1 / ATCC BAA-258) protein is Large ribosomal subunit protein uL16.